A 303-amino-acid chain; its full sequence is Pseudouridine-5'-phosphate glycosidase (303 aa).

Residue glutamate 24 is the Proton donor of the active site. Substrate-binding residues include lysine 85 and valine 105. Aspartate 137 lines the Mn(2+) pocket. A substrate-binding site is contributed by 139–141 (SAD). Catalysis depends on lysine 158, which acts as the Nucleophile.

Belongs to the pseudouridine-5'-phosphate glycosidase family. As to quaternary structure, homotrimer. Mn(2+) is required as a cofactor.

It catalyses the reaction D-ribose 5-phosphate + uracil = psi-UMP + H2O. Functionally, catalyzes the reversible cleavage of pseudouridine 5'-phosphate (PsiMP) to ribose 5-phosphate and uracil. Functions biologically in the cleavage direction, as part of a pseudouridine degradation pathway. The chain is Pseudouridine-5'-phosphate glycosidase from Herpetosiphon aurantiacus (strain ATCC 23779 / DSM 785 / 114-95).